Consider the following 310-residue polypeptide: Beta-lactamase AST-1 (310 aa).

A signal peptide spans 1–31 (MTFSALPFRRADRRRLLAAALAACALTLTAA). Cys-32 is lipidated: N-palmitoyl cysteine. Cys-32 is lipidated: S-diacylglycerol cysteine. Ser-91 (acyl-ester intermediate) is an active-site residue. Ser-151 is a binding site for substrate. The active-site Proton acceptor is the Glu-187. 255–257 (KTG) provides a ligand contact to substrate.

This sequence belongs to the class-A beta-lactamase family.

It is found in the cell membrane. It carries out the reaction a beta-lactam + H2O = a substituted beta-amino acid. Inhibited by clavulanic acid. Functionally, confers high levels of resistance to amoxicillin, benzylpenicillin, piperacillin, ticarcillin and cephalothin. Not active against ceftazidime, cefotaxime and aztreonam. This Nocardia asteroides protein is Beta-lactamase AST-1 (bla).